Here is a 124-residue protein sequence, read N- to C-terminus: 14 kDa phosphohistidine phosphatase (124 aa).

Lys20 contributes to the substrate binding site. The active-site Proton acceptor is the His52. Residue 93–95 (SMG) coordinates substrate.

Belongs to the janus family. Monomer.

The protein resides in the cytoplasm. The catalysed reaction is N(pros)-phospho-L-histidyl-[protein] + H2O = L-histidyl-[protein] + phosphate. It catalyses the reaction N(tele)-phospho-L-histidyl-[protein] + H2O = L-histidyl-[protein] + phosphate. Its function is as follows. Exhibits phosphohistidine phosphatase activity. This Mus musculus (Mouse) protein is 14 kDa phosphohistidine phosphatase (Phpt1).